A 364-amino-acid polypeptide reads, in one-letter code: tRNA-specific 2-thiouridylase MnmA 1 (364 aa).

ATP-binding positions include 10–17 (GMSGGVDS) and M36. C106 (nucleophile) is an active-site residue. An intrachain disulfide couples C106 to C204. G130 serves as a coordination point for ATP. The segment at 154-156 (KDQ) is interaction with tRNA. C204 acts as the Cysteine persulfide intermediate in catalysis. The interaction with tRNA stretch occupies residues 310 to 311 (RY).

Belongs to the MnmA/TRMU family.

It is found in the cytoplasm. The catalysed reaction is S-sulfanyl-L-cysteinyl-[protein] + uridine(34) in tRNA + AH2 + ATP = 2-thiouridine(34) in tRNA + L-cysteinyl-[protein] + A + AMP + diphosphate + H(+). Catalyzes the 2-thiolation of uridine at the wobble position (U34) of tRNA, leading to the formation of s(2)U34. This chain is tRNA-specific 2-thiouridylase MnmA 1, found in Thermoanaerobacter pseudethanolicus (strain ATCC 33223 / 39E) (Clostridium thermohydrosulfuricum).